Here is a 246-residue protein sequence, read N- to C-terminus: tRNA pseudouridine synthase A (246 aa).

The active-site Nucleophile is Asp53. Tyr111 serves as a coordination point for substrate.

This sequence belongs to the tRNA pseudouridine synthase TruA family. As to quaternary structure, homodimer.

It carries out the reaction uridine(38/39/40) in tRNA = pseudouridine(38/39/40) in tRNA. In terms of biological role, formation of pseudouridine at positions 38, 39 and 40 in the anticodon stem and loop of transfer RNAs. This is tRNA pseudouridine synthase A from Lysinibacillus sphaericus (strain C3-41).